Here is a 424-residue protein sequence, read N- to C-terminus: UPF0761 membrane protein Smal_0716 (424 aa).

6 helical membrane passes run 48–68 (VFAL…FPVF), 101–121 (SAGQ…LITL), 144–164 (FLVY…SLAV), 181–201 (WLAD…CITL), 216–236 (AVPG…GIGA), and 251–271 (VAFV…VLLG).

Belongs to the UPF0761 family.

The protein localises to the cell inner membrane. The protein is UPF0761 membrane protein Smal_0716 of Stenotrophomonas maltophilia (strain R551-3).